The sequence spans 605 residues: Hepatocyte nuclear factor 1-alpha-A (605 aa).

Residues 1 to 31 form a dimerization region; it reads MASQLSYLQRELLQALLESGVTKEALKKALA. In terms of domain architecture, HNF-p1 spans 1 to 32; that stretch reads MASQLSYLQRELLQALLESGVTKEALKKALAD. The segment at 57–81 is disordered; the sequence is QLPNGLGESHISEDESSDDGEDFTP. The POU-specific atypical domain maps to 85–180; the sequence is KELERLSPEE…IARLFTFTEF (96 aa). 6 interaction with DNA regions span residues 128-130, 141-147, 153-156, 206-209, 266-268, and 273-276; these read QRE, HLSQHLN, KTQK, RFKW, RVY, and NRRK. The Nuclear localization signal motif lies at 200-208; sequence KKMRRNRFK. Positions 202–282 form a DNA-binding region, homeobox; HNF1-type; the sequence is MRRNRFKWGP…NRRKEEAFRH (81 aa). The span at 321-335 shows a compositional bias: polar residues; it reads DRSAVMANSQSTPSP. The interval 321–343 is disordered; sequence DRSAVMANSQSTPSPSALEPSHS. The segment at 448-453 is not present in other members of the HNF1 family; sequence PSHQLH.

Belongs to the HNF1 homeobox family. As to quaternary structure, binds DNA as dimer. Forms a homodimer or heterodimer with HNF1-alpha-B. Potentially also form a heterodimer with HNF1-beta. Protein expressed in liver, stomach, small intestine, colon and kidney. Not expressed in spleen, lung, blood, heart muscle, skeletal muscle, testis and brain.

The protein localises to the nucleus. In terms of biological role, transcriptional activator that regulates the tissue specific expression of multiple genes, especially in pancreas and liver. Binds to the hepatocyte specific promoter element HP1. Binds to the inverted palindrome 5'-GTTAATNATTAAC-3'. The chain is Hepatocyte nuclear factor 1-alpha-A (hnf1a-a) from Xenopus laevis (African clawed frog).